A 953-amino-acid chain; its full sequence is MMSSLSVEGMLLKSARESCLPARVNQRRNGDLRRLNHHRQSSFVRCLTPARVSRPELRSSGLTPPRAVLNPVSPPVTTAKKRVFTFGKGRSEGNRDMKSLLGGKGANLAEMSSIGLSVPPGLTISTEACEEYQQNGKSLPPGLWDEISEGLDYVQKEMSASLGDPSKPLLLSVRSGAAISMPGMMDTVLNLGLNDEVVAGLAGKSGARFAYDSYRRFLDMFGNVVMGIPHSLFDEKLEQMKAEKGIHLDTDLTAADLKDLVEKYKNVYVEAKGEKFPTDPKKQLELAVNAVFDSWDSPRANKYRSINQITGLKGTAVNIQSMVFGNMGNTSGTGVLFTRNPSTGEKKLYGEFLINAQGEDVVAGIRTPEDLGTMETCMPEAYKELVENCEILERHYKDMMDIEFTVQENRLWMLQCRTGKRTGKGAVRIAVDMVNEGLIDTRTAIKRVETQHLDQLLHPQFEDPSAYKSHVVATGLPASPGAAVGQVCFSAEDAETWHAQGKSAILVRTETSPEDVGGMHAAAGILTARGGMTSHAAVVARGWGKCCVSGCADIRVNDDMKIFTIGDRVIKEGDWLSLNGTTGEVILGKQLLAPPAMSNDLEIFMSWADQARRLKVMANADTPNDALTARNNGAQGIGLCRTEHMFFASDERIKAVRKMIMAVTPEQRKVALDLLLPYQRSDFEGIFRAMDGLPVTIRLLDPPLHEFLPEGDLEHIVNELAVDTGMSADEIYSKIENLSEVNPMLGFRGCRLGISYPELTEMQVRAIFQAAVSMTNQGVTVIPEIMVPLVGTPQELRHQISVIRGVAANVFAEMGVTLEYKVGTMIEIPRAALIAEEIGKEADFFSFGTNDLTQMTFGYSRDDVGKFLQIYLAQGILQHDPFEVIDQKGVGQLIKMATEKGRAANPSLKVGICGEHGGEPSSVAFFDGVGLDYVSCSPFRVPIARLAAAQVIV.

The transit peptide at 1 to 77 (MMSSLSVEGM…VLNPVSPPVT (77 aa)) directs the protein to the chloroplast. Residues 55–74 (PELRSSGLTPPRAVLNPVSP) are disordered. T533 is subject to Phosphothreonine; by PDRP1. The active-site Tele-phosphohistidine intermediate is H535. Positions 641, 698, 827, 848, 849, 850, and 851 each coordinate substrate. E827 provides a ligand contact to Mg(2+). D851 provides a ligand contact to Mg(2+). C913 serves as the catalytic Proton donor.

The protein belongs to the PEP-utilizing enzyme family. In terms of assembly, homotetramer. Mg(2+) is required as a cofactor. Phosphorylation of Thr-533 in the dark inactivates the enzyme. Dephosphorylation upon light stimulation reactivates the enzyme. Isoform 1 mainly localized in mesophyll cells and only a low level is found in bundle sheath cells. Isoform 2 is expressed in roots and stems.

Its subcellular location is the plastid. It is found in the chloroplast. The protein localises to the cytoplasm. The enzyme catalyses pyruvate + phosphate + ATP = phosphoenolpyruvate + AMP + diphosphate + H(+). It participates in photosynthesis; C4 acid pathway. Its activity is regulated as follows. Activated by light-induced dephosphorylation. Inhibited by dark-induced phosphorylation. Both reactions are catalyzed by PDRP1. Its function is as follows. Formation of phosphoenolpyruvate, which is the primary acceptor of CO(2) in C4 and some Crassulacean acid metabolism plants. The protein is Pyruvate, phosphate dikinase, chloroplastic (PPDK) of Flaveria trinervia (Clustered yellowtops).